Here is a 241-residue protein sequence, read N- to C-terminus: ATP synthase subunit a (241 aa).

5 helical membrane passes run 30 to 50 (GQIFLSSWILIGALLAFVLVG), 89 to 109 (LPFIGTLFLFIFVSNWGGALI), 128 to 148 (INTTVAMALLVTLAYFYAGLS), 193 to 213 (LAVGVLVYLVPLIVPLPVMLL), and 214 to 234 (GLFTSAIQALIFATLAAFYIG).

It belongs to the ATPase A chain family. In terms of assembly, F-type ATPases have 2 components, CF(1) - the catalytic core - and CF(0) - the membrane proton channel. CF(1) has five subunits: alpha(3), beta(3), gamma(1), delta(1), epsilon(1). CF(0) has four main subunits: a, b, b' and c.

The protein resides in the cellular thylakoid membrane. Its function is as follows. Key component of the proton channel; it plays a direct role in the translocation of protons across the membrane. The chain is ATP synthase subunit a from Synechococcus sp. (strain CC9311).